Consider the following 555-residue polypeptide: Formate--tetrahydrofolate ligase (555 aa).

It belongs to the formate--tetrahydrofolate ligase family.

The enzyme catalyses (6S)-5,6,7,8-tetrahydrofolate + formate + ATP = (6R)-10-formyltetrahydrofolate + ADP + phosphate. The protein operates within one-carbon metabolism; tetrahydrofolate interconversion. The chain is Formate--tetrahydrofolate ligase from Porphyromonas gingivalis (strain ATCC BAA-308 / W83).